The following is a 298-amino-acid chain: ATP synthase gamma chain (298 aa).

It belongs to the ATPase gamma chain family. In terms of assembly, F-type ATPases have 2 components, CF(1) - the catalytic core - and CF(0) - the membrane proton channel. CF(1) has five subunits: alpha(3), beta(3), gamma(1), delta(1), epsilon(1). CF(0) has three main subunits: a, b and c.

Its subcellular location is the cell inner membrane. Functionally, produces ATP from ADP in the presence of a proton gradient across the membrane. The gamma chain is believed to be important in regulating ATPase activity and the flow of protons through the CF(0) complex. The sequence is that of ATP synthase gamma chain from Francisella philomiragia subsp. philomiragia (strain ATCC 25017 / CCUG 19701 / FSC 153 / O#319-036).